Consider the following 575-residue polypeptide: V-type ATP synthase alpha chain (575 aa).

238–245 (GPFGAGKT) contacts ATP.

This sequence belongs to the ATPase alpha/beta chains family.

It catalyses the reaction ATP + H2O + 4 H(+)(in) = ADP + phosphate + 5 H(+)(out). Its function is as follows. Produces ATP from ADP in the presence of a proton gradient across the membrane. The V-type alpha chain is a catalytic subunit. This chain is V-type ATP synthase alpha chain (atpA), found in Borreliella burgdorferi (strain ATCC 35210 / DSM 4680 / CIP 102532 / B31) (Borrelia burgdorferi).